We begin with the raw amino-acid sequence, 152 residues long: Large ribosomal subunit protein uL22 (152 aa).

Belongs to the universal ribosomal protein uL22 family. Part of the 50S ribosomal subunit.

This protein binds specifically to 23S rRNA. It makes multiple contacts with different domains of the 23S rRNA in the assembled 50S subunit and ribosome. Functionally, the globular domain of the protein is located near the polypeptide exit tunnel on the outside of the subunit, while an extended beta-hairpin is found that lines the wall of the exit tunnel in the center of the 70S ribosome. The chain is Large ribosomal subunit protein uL22 from Nitrosopumilus maritimus (strain SCM1).